Here is a 367-residue protein sequence, read N- to C-terminus: Glutamate 5-kinase (367 aa).

Position 10 (lysine 10) interacts with ATP. Substrate contacts are provided by serine 50, aspartate 137, and asparagine 149. ATP contacts are provided by residues 169–170 and 211–217; these read TD and TGGMGTK. Positions 275–353 constitute a PUA domain; it reads AGEITVDDGA…QEISEILGYE (79 aa).

Belongs to the glutamate 5-kinase family.

It is found in the cytoplasm. The enzyme catalyses L-glutamate + ATP = L-glutamyl 5-phosphate + ADP. Its pathway is amino-acid biosynthesis; L-proline biosynthesis; L-glutamate 5-semialdehyde from L-glutamate: step 1/2. In terms of biological role, catalyzes the transfer of a phosphate group to glutamate to form L-glutamate 5-phosphate. This Serratia proteamaculans (strain 568) protein is Glutamate 5-kinase.